A 504-amino-acid polypeptide reads, in one-letter code: Tegument protein VP16 homolog (504 aa).

3 disordered regions span residues 354–381 (EAGG…RLQR), 395–421 (ATPR…QGRR), and 435–486 (RSGP…ANPF). Low complexity predominate over residues 361–378 (RSGSTRTRGRAARSTTGR). A compositionally biased stretch (low complexity) spans 447–460 (PVRSGLGLSRARGS).

The protein belongs to the herpesviridae tegument protein VP16 protein family. As to quaternary structure, associates with the VP16-induced complex; binding to host HCFC1 activates VP16 for association with the octamer motif-binding host protein POU2F1, to form a multiprotein-DNA complex responsible for activating transcription of the viral immediate early genes.

The protein localises to the virion tegument. It localises to the host nucleus. In terms of biological role, transcriptional activator of immediate-early (IE) gene products (alpha genes). Acts as a key activator of lytic infection by initiating the lytic program through the assembly of the transcriptional regulatory VP16-induced complex composed of VP16 and two cellular factors, HCFC1 and POU2F1. VP16-induced complex represents a regulatory switch: when it is on, it promotes IE-gene expression and thus lytic infection, and when it is off, it limits IE-gene transcription favoring latent infection. Functionally, may play a role in the aggregation of tegument proteins around nucleocapsids during virus morphogenesis. The protein is Tegument protein VP16 homolog of Bos taurus (Bovine).